The chain runs to 381 residues: Heme A synthase (381 aa).

The disordered stretch occupies residues 1-23 (MARRPVFQEVTETTPPGTTPSGG). Positions 11–23 (TETTPPGTTPSGG) are enriched in low complexity. 8 helical membrane passes run 34-54 (GAIR…IALG), 120-140 (RLLG…FLAT), 151-171 (LLLL…MVHS), 185-205 (LATH…YVLA), 228-248 (TTGL…VAGI), 285-305 (LVQF…VVVF), 319-339 (AYVA…MNVL), and 342-362 (SPLP…TLIL). Histidine 290 serves as a coordination point for heme. A heme-binding site is contributed by histidine 350.

Belongs to the COX15/CtaA family. Type 2 subfamily. Interacts with CtaB. The cofactor is heme b.

The protein resides in the cell membrane. It carries out the reaction Fe(II)-heme o + 2 A + H2O = Fe(II)-heme a + 2 AH2. Its pathway is porphyrin-containing compound metabolism; heme A biosynthesis; heme A from heme O: step 1/1. In terms of biological role, catalyzes the conversion of heme O to heme A by two successive hydroxylations of the methyl group at C8. The first hydroxylation forms heme I, the second hydroxylation results in an unstable dihydroxymethyl group, which spontaneously dehydrates, resulting in the formyl group of heme A. This chain is Heme A synthase, found in Paracoccus denitrificans (strain Pd 1222).